Consider the following 106-residue polypeptide: Integration host factor subunit alpha (106 aa).

It belongs to the bacterial histone-like protein family. Heterodimer of an alpha and a beta chain.

Its function is as follows. This protein is one of the two subunits of integration host factor, a specific DNA-binding protein that functions in genetic recombination as well as in transcriptional and translational control. The sequence is that of Integration host factor subunit alpha from Paramagnetospirillum magneticum (strain ATCC 700264 / AMB-1) (Magnetospirillum magneticum).